We begin with the raw amino-acid sequence, 891 residues long: MSFMDNLFNMADKKELKKFNKTVDIIDSLEPKFESMADSELKNMTNIFKERLANGESIDDILPEAFAVVREVSKRVLGLRHYRVQMIGGIVLHQGRIAEMKTGEGKTLVATAPVYLNALTGKGVHVVTVNDYLAKRDRDQMAKIYEFLGMSVGVIIHGQNPKVRKEQYDCDITYGTNNEYGFDYLKDNMVIHKEQRVQRGLNYAIVDEVDSILIDEARTPLIISGPGDKSTHLYSDANTFVLTLKPDDYELEEKDKAVSLTASGIQKAEVYFNVDNITDISHTELYHHINQALRAHVIMKKDVDYVAKDGEIVIVDEFTGRLMFGRRYSEGLHQAIEAKEGLKIQRESKTLATVTFQNYFRMYKKLSGMTGTAKTEEEEFKAIYKMDVFQVPTNKLMIREDLPDCVYKSEIGKFNAVAQEIIERHKVNQPILVGTVSIEKSELLSQILKKKGIKHEVLNAKHHDKEAEIIAQAGRLGAVTIATNMAGRGTDIVLGGNPDFLTKREMRRNGFKEEIVNRVDTPIEGIPVKGNEILFEAREEYEKLFEKFKQQTQEEQKQVVEAGGLAIIGTERHESRRIDNQLRGRAGRQGDPGSSRFYIGLDDDLMRLFGSDRISGIVDKIGLEEDMPIEHRILSKSIEGAQKKVEGKNFGIRKHVLQYDDVMNKQREIIYAERKRVLEGEDLQEQIQSMTHSIIEEAVTLYTQDKGFDEEGFKEHMYNLFLPKGSIEIPEIEKLNPVEITEKVYEIAMKIYTSKEEQVGYERMREVERVILLQAVDNHWIDHIDAMDQLRQGIGLRAVGQQDPVIAYKMEGFDMFDEMNKHIKEDTVRYLFNITIETPVERKAVVDVENLSSPSDGTLPTSKTVKKDEKVGRNDLCPCGSGKKYKNCCGR.

Residues Gln85, Gly103–Thr107, and Asp491 each bind ATP. 4 residues coordinate Zn(2+): Cys877, Cys879, Cys888, and Cys889.

This sequence belongs to the SecA family. As to quaternary structure, monomer and homodimer. Part of the essential Sec protein translocation apparatus which comprises SecA, SecYEG and auxiliary proteins SecDF. Other proteins may also be involved. Requires Zn(2+) as cofactor.

The protein resides in the cell membrane. It localises to the cytoplasm. The catalysed reaction is ATP + H2O + cellular proteinSide 1 = ADP + phosphate + cellular proteinSide 2.. Its function is as follows. Part of the Sec protein translocase complex. Interacts with the SecYEG preprotein conducting channel. Has a central role in coupling the hydrolysis of ATP to the transfer of proteins into and across the cell membrane, serving as an ATP-driven molecular motor driving the stepwise translocation of polypeptide chains across the membrane. The polypeptide is Protein translocase subunit SecA 1 (Clostridioides difficile (strain 630) (Peptoclostridium difficile)).